The sequence spans 357 residues: Alanine racemase (357 aa).

Catalysis depends on Lys35, which acts as the Proton acceptor; specific for D-alanine. Position 35 is an N6-(pyridoxal phosphate)lysine (Lys35). Substrate is bound at residue Arg131. Residue Tyr256 is the Proton acceptor; specific for L-alanine of the active site. Met304 contacts substrate.

Belongs to the alanine racemase family. The cofactor is pyridoxal 5'-phosphate.

It carries out the reaction L-alanine = D-alanine. It functions in the pathway amino-acid biosynthesis; D-alanine biosynthesis; D-alanine from L-alanine: step 1/1. Catalyzes the interconversion of L-alanine and D-alanine. May also act on other amino acids. This Legionella pneumophila (strain Lens) protein is Alanine racemase (alr).